We begin with the raw amino-acid sequence, 946 residues long: MSSFSITRKKTPFQKHREEEEARKKKAEDETARLYQEFVESFQGDNATTKTFVRGGTINPGDKPKVDSEGEKSKDGGSVSKKGSRYVPSFLPPPLASKGKEPEKKREEERPREREKGKTRNIDNFMEELKREQEMRERRNQDRDRQGDSSPSSRFDELPDDFDPSGRPGSFDDGDPQTTNLYVGNLSPKVDENFLLRTFGRFGPIASVKIMWPRTDEEKRRQRNCGFVSFMNRADGQAAKDEMQGIIVYEYELKIGWGKAVSLPSQALPAPPPGHMAIRSKEGCNLVFSGQTGPPIITSVPNQNSELVLTPNVPDITVVTPEDEHLRHVIDTLALYVLDGECAFEQAIMERGRGNPLFKFMFELGSKEHTYYVWRLYSFAQGDTLQRWRTEPYIMITGSGRWIPPPLPVTRTQEHEKESASTYAAGRTRRAEVERTLTDPQRDEFEDMLRALTLERSQIKEAMGFALDNADAAGEVVEVLTESLTLKETSIPTKVARLMLVSDILHNSSARVKNASAYRTKFEATLPDIMESFNDLYRSITGRITAEALKERVLKVLQVWADWFLFSDAYIYGLRSTFLRSGVSGVTSFHSICGDAPEIENKSYADNMSDIGKINPDAALAIGKGAARQELMNLPIAELERRCRHNGLSLVGGRVMMVTRLLSLEDTEKQRGYEAVDEIPKHPQNHSTWEEVKSEREHIKNSYAEVEMKEPVNLPTTIPIPQPELKAFVGKEKNELILPASKWARDDDEADDEQKRSSSSGSDNTGGITFKADGEDLKGNDCVRAQPDNGMDEEQRQKRRRIEVALIEYRETLEEQGMKNPEEIERKVEINRKRLEVDYGLSGPNEGNRNQKSIIERKEKREDSQESSKKRHRGENKSQSPPRKSSTRERDHDLGRDRDRERHRDRDRQHDLNRDRDRREKSSSHDRDDNDRSKERDRDWRRRGTR.

Disordered stretches follow at residues methionine 1 to aspartate 29 and serine 41 to valine 183. 3 stretches are compositionally biased toward basic and acidic residues: residues lysine 15–aspartate 29, aspartate 62–aspartate 75, and lysine 98–glycine 147. An RRM domain is found at threonine 179 to alanine 260. An SURP motif repeat occupies valine 329 to tyrosine 372. Residues leucine 437–glycine 582 enclose the CID domain. One can recognise an SAP domain in the interval leucine 631–glutamate 665. 2 disordered regions span residues alanine 740 to glutamine 797 and glutamate 836 to arginine 946. The segment covering serine 757 to glycine 767 has biased composition (polar residues). 3 stretches are compositionally biased toward basic and acidic residues: residues alanine 772–aspartate 781, isoleucine 854–serine 868, and serine 886–arginine 946.

In terms of assembly, component of the SWAP1-SFPS-RRC1 splicing factor complex which modulates pre-mRNA splicing to promote photomorphogenesis. Interacts with SWAP1 in a light-independent manner. As to expression, expressed in leaves, inflorescence stems, roots, flower buds, open flowers and siliques.

Its subcellular location is the nucleus speckle. Functionally, as a member of the SWAP1-SFPS-RRC1 splicing factor complex, modulates photomorphogenesis by regulating the gene expression and pre-messenger RNA (mRNA) alternative splicing of a large number of genes, including those involved in plant responses to light signaling. SR-like splicing factor required for phytochrome B (phyB) signal transduction and involved in phyB-dependent alternative splicing. The polypeptide is Protein RRC1 (Arabidopsis thaliana (Mouse-ear cress)).